The chain runs to 418 residues: Voltage-gated ClC-type chloride channel ClcB (418 aa).

10 helical membrane-spanning segments follow: residues 5–25 (LLIATVVGILAAFAVAGFRHA), 54–74 (LLTPALGGLAAGLLLMGWQKF), 146–166 (LWIACGAAAGMAAAYRAPLAG), 168–188 (LFIAEVLFGTMMLASLGPVII), 222–242 (ALIISTGVLAGLCGPLLLTLM), 260–280 (LALGGLIVGLLSLFTPAVWGN), 291–311 (APPLLMIIAGIFLCKLCAVLA), 316–336 (GAPGGVFTPTLFIGLAIGMLY), 352–372 (LLLGLTGMATLLAATTHAPIM), and 380–400 (MTGEYQLLPGLLIACVIASVI).

This sequence belongs to the chloride channel (TC 2.A.49) family. ClcB subfamily.

Its subcellular location is the cell inner membrane. In terms of biological role, probably acts as an electrical shunt for an outwardly-directed proton pump that is linked to amino acid decarboxylation, as part of the extreme acid resistance (XAR) response. The polypeptide is Voltage-gated ClC-type chloride channel ClcB (Escherichia coli O9:H4 (strain HS)).